The following is a 436-amino-acid chain: KICSTOR complex protein kaptin (436 aa).

Met-1 bears the N-acetylmethionine mark.

As to quaternary structure, part of the KICSTOR complex composed of KPTN, ITFG2, KICS2 and SZT2. SZT2 probably serves as a link between the other three proteins in the KICSTOR complex and mediates the direct interaction with the GATOR1 complex. May associate with F-actin filaments.

Its subcellular location is the lysosome membrane. It localises to the cell projection. The protein resides in the lamellipodium. The protein localises to the stereocilium. Functionally, as part of the KICSTOR complex functions in the amino acid-sensing branch of the TORC1 signaling pathway. Recruits, in an amino acid-independent manner, the GATOR1 complex to the lysosomal membranes and allows its interaction with GATOR2 and the RAG GTPases. Functions upstream of the RAG GTPases and is required to negatively regulate mTORC1 signaling in absence of amino acids. In absence of the KICSTOR complex mTORC1 is constitutively localized to the lysosome and activated. The KICSTOR complex is also probably involved in the regulation of mTORC1 by glucose. This chain is KICSTOR complex protein kaptin, found in Homo sapiens (Human).